Consider the following 397-residue polypeptide: Lysophospholipid transporter LplT (397 aa).

Topologically, residues 1–17 are periplasmic; the sequence is MSESVHTNTSLWSKGMK. The helical transmembrane segment at 18–38 threads the bilayer; the sequence is AVIVAQFLSAFGDNALLFATL. Over 39 to 52 the chain is Cytoplasmic; that stretch reads ALLNAQFYPEWSQP. Residues 53–73 form a helical membrane-spanning segment; it reads ILQMVFVGAYILFAPFVGQVA. Residues 74 to 90 lie on the Periplasmic side of the membrane; the sequence is DSFAKGRVMMFANGLKL. The helical transmembrane segment at 91 to 111 threads the bilayer; sequence LGAASICFGINPFLGYTLVGV. Residues 112–144 are Cytoplasmic-facing; it reads GAAAYSPAKYGILGELTTGSKLVKANGLMEAST. The chain crosses the membrane as a helical span at residues 145 to 165; that stretch reads IAAILLGSVAGGVLADWHVLV. Position 166 (Ala166) is a topological domain, periplasmic. The helical transmembrane segment at 167–187 threads the bilayer; it reads LAACALAYGGAVVANIYIPKL. Residues 188-226 are Cytoplasmic-facing; the sequence is AAARPGQSWNLINMTRSFLNACTSLWRNGETRFSLVGTS. A helical membrane pass occupies residues 227 to 247; the sequence is LFWGAGVTLRFLLVLWVPVAL. Over 248-256 the chain is Periplasmic; the sequence is GITDNATPT. Residues 257–277 form a helical membrane-spanning segment; it reads YLNAMVAIGIVVGAGAAAKLV. The Cytoplasmic portion of the chain corresponds to 278–280; the sequence is TLE. The chain crosses the membrane as a helical span at residues 281 to 301; sequence TVSRCMPAGILIGVVVLIFSL. Topologically, residues 302–304 are periplasmic; the sequence is QHE. The helical transmembrane segment at 305–325 threads the bilayer; the sequence is LLPAYALLMLIGVMGGFFVVP. Residues 326 to 343 are Cytoplasmic-facing; it reads LNALLQERGKKSVGAGNA. The helical transmembrane segment at 344 to 364 threads the bilayer; it reads IAVQNLGENSAMLLMLGIYSL. Residues 365 to 366 are Periplasmic-facing; sequence AV. Residues 367–387 traverse the membrane as a helical segment; sequence MIGIPVVPIGIGFGALFALAI. The Cytoplasmic segment spans residues 388–397; the sequence is TALWIWQRRH.

This sequence belongs to the major facilitator superfamily. LplT (TC 2.A.1.42) family.

It is found in the cell inner membrane. Functionally, catalyzes the facilitated diffusion of 2-acyl-glycero-3-phosphoethanolamine (2-acyl-GPE) into the cell. The sequence is that of Lysophospholipid transporter LplT from Escherichia coli (strain SE11).